The sequence spans 275 residues: Undecaprenyl-diphosphatase (275 aa).

The next 8 helical transmembrane spans lie at methionine 1–isoleucine 21, valine 42–tyrosine 62, threonine 80–glycine 100, leucine 107–isoleucine 127, serine 147–alanine 167, threonine 184–valine 204, isoleucine 214–isoleucine 234, and phenylalanine 249–methionine 269.

It belongs to the UppP family.

The protein resides in the cell membrane. The enzyme catalyses di-trans,octa-cis-undecaprenyl diphosphate + H2O = di-trans,octa-cis-undecaprenyl phosphate + phosphate + H(+). Catalyzes the dephosphorylation of undecaprenyl diphosphate (UPP). Confers resistance to bacitracin. The chain is Undecaprenyl-diphosphatase from Deinococcus deserti (strain DSM 17065 / CIP 109153 / LMG 22923 / VCD115).